The sequence spans 346 residues: Methionine import ATP-binding protein MetN 1 (346 aa).

The ABC transporter domain occupies 2 to 241; sequence IEFKQVTKTF…PQHPTTEKFV (240 aa). An ATP-binding site is contributed by 38–45; the sequence is GFSGAGKS.

Belongs to the ABC transporter superfamily. Methionine importer (TC 3.A.1.24) family. The complex is composed of two ATP-binding proteins (MetN), two transmembrane proteins (MetI) and a solute-binding protein (MetQ).

Its subcellular location is the cell membrane. The catalysed reaction is L-methionine(out) + ATP + H2O = L-methionine(in) + ADP + phosphate + H(+). It catalyses the reaction D-methionine(out) + ATP + H2O = D-methionine(in) + ADP + phosphate + H(+). In terms of biological role, part of the ABC transporter complex MetNIQ involved in methionine import. Responsible for energy coupling to the transport system. This is Methionine import ATP-binding protein MetN 1 from Shouchella clausii (strain KSM-K16) (Alkalihalobacillus clausii).